Consider the following 241-residue polypeptide: Ribonuclease PH (241 aa).

Residues R87 and 125–127 (GTR) each bind phosphate.

The protein belongs to the RNase PH family. In terms of assembly, homohexameric ring arranged as a trimer of dimers.

It catalyses the reaction tRNA(n+1) + phosphate = tRNA(n) + a ribonucleoside 5'-diphosphate. Its function is as follows. Phosphorolytic 3'-5' exoribonuclease that plays an important role in tRNA 3'-end maturation. Removes nucleotide residues following the 3'-CCA terminus of tRNAs; can also add nucleotides to the ends of RNA molecules by using nucleoside diphosphates as substrates, but this may not be physiologically important. Probably plays a role in initiation of 16S rRNA degradation (leading to ribosome degradation) during starvation. The protein is Ribonuclease PH of Nitrosomonas europaea (strain ATCC 19718 / CIP 103999 / KCTC 2705 / NBRC 14298).